The chain runs to 132 residues: Small ribosomal subunit protein eS24 (132 aa).

Residues 91–132 (LATHGLYEKKKTSRKQRTERQNRMKKVRSIKKASVGAAGKKN) form a disordered region. Residues 96 to 112 (LYEKKKTSRKQRTERQN) are compositionally biased toward basic and acidic residues.

The protein belongs to the eukaryotic ribosomal protein eS24 family. As to quaternary structure, component of the small ribosomal subunit.

It localises to the cytoplasm. Its function is as follows. Component of the small ribosomal subunit. The ribosome is a large ribonucleoprotein complex responsible for the synthesis of proteins in the cell. Required for processing of pre-rRNA and maturation of 40S ribosomal subunits. The sequence is that of Small ribosomal subunit protein eS24 (rps24) from Oryzias latipes (Japanese rice fish).